Reading from the N-terminus, the 488-residue chain is Acetyl-coenzyme A carboxylase carboxyl transferase subunit beta, chloroplastic (488 aa).

The CoA carboxyltransferase N-terminal domain maps to 224–488 (LWIQCDNCYG…FFPLNKNEIK (265 aa)). Cysteine 228, cysteine 231, cysteine 244, and cysteine 247 together coordinate Zn(2+). The segment at 228 to 247 (CDNCYGLMYKKVEMNVCEEC) adopts a C4-type zinc-finger fold.

Belongs to the AccD/PCCB family. In terms of assembly, acetyl-CoA carboxylase is a heterohexamer composed of biotin carboxyl carrier protein, biotin carboxylase and 2 subunits each of ACCase subunit alpha and ACCase plastid-coded subunit beta (accD). Requires Zn(2+) as cofactor.

It is found in the plastid. The protein resides in the chloroplast stroma. It catalyses the reaction N(6)-carboxybiotinyl-L-lysyl-[protein] + acetyl-CoA = N(6)-biotinyl-L-lysyl-[protein] + malonyl-CoA. Its pathway is lipid metabolism; malonyl-CoA biosynthesis; malonyl-CoA from acetyl-CoA: step 1/1. Its function is as follows. Component of the acetyl coenzyme A carboxylase (ACC) complex. Biotin carboxylase (BC) catalyzes the carboxylation of biotin on its carrier protein (BCCP) and then the CO(2) group is transferred by the transcarboxylase to acetyl-CoA to form malonyl-CoA. The chain is Acetyl-coenzyme A carboxylase carboxyl transferase subunit beta, chloroplastic from Arabis hirsuta (Hairy rock-cress).